The sequence spans 401 residues: Riboflavin biosynthesis protein RibBA (401 aa).

Residues 1–203 (MTDFQFSKVE…IQQLQEYRRK (203 aa)) form a DHBP synthase region. Residues 30 to 31 (RE), D35, 142 to 146 (RNGHT), and E166 each bind D-ribulose 5-phosphate. E31 contacts Mg(2+). H145 is a binding site for Mg(2+). Residues 204–401 (HDSLVKQISV…QIKMGHMFNF (198 aa)) are GTP cyclohydrolase II. 254–258 (RIHSE) contacts GTP. Zn(2+) is bound by residues C259, C270, and C272. Residues Q275, 297-299 (EGR), and T319 each bind GTP. Residue D331 is the Proton acceptor; for GTP cyclohydrolase activity of the active site. The Nucleophile; for GTP cyclohydrolase activity role is filled by R333. GTP-binding residues include T354 and K359.

This sequence in the N-terminal section; belongs to the DHBP synthase family. It in the C-terminal section; belongs to the GTP cyclohydrolase II family. Requires Mg(2+) as cofactor. The cofactor is Mn(2+). Zn(2+) serves as cofactor.

It catalyses the reaction D-ribulose 5-phosphate = (2S)-2-hydroxy-3-oxobutyl phosphate + formate + H(+). The catalysed reaction is GTP + 4 H2O = 2,5-diamino-6-hydroxy-4-(5-phosphoribosylamino)-pyrimidine + formate + 2 phosphate + 3 H(+). It functions in the pathway cofactor biosynthesis; riboflavin biosynthesis; 2-hydroxy-3-oxobutyl phosphate from D-ribulose 5-phosphate: step 1/1. The protein operates within cofactor biosynthesis; riboflavin biosynthesis; 5-amino-6-(D-ribitylamino)uracil from GTP: step 1/4. Its function is as follows. Catalyzes the conversion of D-ribulose 5-phosphate to formate and 3,4-dihydroxy-2-butanone 4-phosphate. Catalyzes the conversion of GTP to 2,5-diamino-6-ribosylamino-4(3H)-pyrimidinone 5'-phosphate (DARP), formate and pyrophosphate. In Actinobacillus pleuropneumoniae serotype 5b (strain L20), this protein is Riboflavin biosynthesis protein RibBA.